Reading from the N-terminus, the 1463-residue chain is Collagen alpha-1(III) chain (1463 aa).

Residues 1–23 form the signal peptide; sequence MMSFVQCGTWFLLTLLHPSLILA. The propeptide at 24-154 is N-terminal propeptide; sequence QQSNVDELGC…CPTGGQNYSP (131 aa). A VWFC domain is found at 31–90; the sequence is LGCNYLGQSYESRDVWKPEPCQICVCDSGSVLCDDIMCDDEPLDCPNPEIPFGECCAICP. Residues 97-1195 are disordered; sequence PVIPDGNRPQ…PGPPGAPGPC (1099 aa). Residues 147–156 show a composition bias toward polar residues; that stretch reads TGGQNYSPQF. Residues 155-169 form a nonhelical region (N-terminal) region; it reads QFDSYDVKSGVGGMG. Over residues 164-173 the composition is skewed to gly residues; that stretch reads GVGGMGGYPG. Residues 170–1195 are triple-helical region; it reads GYPGPAGPPG…PGPPGAPGPC (1026 aa). Over residues 174–184 the composition is skewed to pro residues; sequence PAGPPGPPGPP. Low complexity predominate over residues 186–198; sequence SSGHPGSPGSPGY. Over residues 228-240 the composition is skewed to basic and acidic residues; sequence KDGESGRPGRPGE. Positions 250–259 are enriched in low complexity; it reads KGPAGIPGFP. The residue at position 262 (Lys262) is a 5-hydroxylysine; alternate. Residue Lys262 is glycosylated (O-linked (Gal...) hydroxylysine; alternate). Residues 265-276 are compositionally biased toward basic and acidic residues; sequence RGFDGRNGEKGE. Lys283 carries the 5-hydroxylysine modification. Composition is skewed to low complexity over residues 310–321 and 354–379; these read PGLPGAAGARGN and PAGSPGSNGSPGQRGEPGPQGHAGAQ. A compositionally biased stretch (gly residues) spans 389–398; it reads GSPGGKGEMG. Composition is skewed to low complexity over residues 399 to 429 and 481 to 502; these read PAGIPGAPGLLGARGPPGPAGANGAPGQRGP and PGERGAPGFRGPAGPNGAPGEK. The span at 527 to 548 shows a compositional bias: gly residues; sequence GTPGGPGIRGMPGSPGGPGNDG. 2 stretches are compositionally biased toward low complexity: residues 606–615 and 637–652; these read PAGKNGETGP and QGLQGIPGTSGPPGEN. Residues 668–677 are compositionally biased toward gly residues; it reads GVPGGKGDSG. The segment covering 678 to 691 has biased composition (low complexity); sequence APGERGPPGTAGTP. Over residues 692–708 the composition is skewed to gly residues; that stretch reads GLRGGAGPPGPEGGKGP. Pro residues predominate over residues 709-718; sequence AGPPGPPGTS. The span at 822–834 shows a compositional bias: basic and acidic residues; that stretch reads AKGERGAPGEKGE. The span at 835 to 849 shows a compositional bias: gly residues; it reads GGPPGAAGPPGGSGP. Lys859 is modified (5-hydroxylysine). Over residues 863–879 the composition is skewed to gly residues; sequence GSPGGPGAAGFPGGRGL. Residues 889–906 show a composition bias toward pro residues; it reads PGPPGPSGAPGKDGPPGP. 2 stretches are compositionally biased toward low complexity: residues 907-934 and 945-960; these read AGNSGSPGNPGVAGPKGDAGQPGEKGPP and PLGIAGLTGARGLAGP. Lys976 is modified (5-hydroxylysine). Positions 1045–1054 are enriched in pro residues; the sequence is PGHPGPPGPV. Low complexity predominate over residues 1068–1084; sequence PAGPSGAPGPAGARGAP. Residues Lys1093 and Lys1105 each carry the 5-hydroxylysine modification. Residues 1120 to 1132 are compositionally biased toward low complexity; the sequence is PGAAGHQGAVGSP. The segment covering 1180–1192 has biased composition (pro residues); it reads PGQPGPPGPPGAP. A propeptide spans 1219-1463 (C-terminal propeptide); the sequence is DDPMDFKINT…GVDIGPVCFL (245 aa). The Fibrillar collagen NC1 domain maps to 1229 to 1463; sequence EEIMSSLKSV…GVDIGPVCFL (235 aa). Cystine bridges form between Cys1259-Cys1291, Cys1299-Cys1461, and Cys1369-Cys1414. Ca(2+)-binding residues include Asp1277, Asn1279, Gln1280, Cys1282, and Asp1285.

The protein belongs to the fibrillar collagen family. Trimers of identical alpha 1(III) chains. The chains are linked to each other by interchain disulfide bonds. Trimers are also cross-linked via hydroxylysines. Interacts with ADGRG1. In terms of processing, O-glycosylated. Post-translationally, prolines at the third position of the tripeptide repeating unit (G-X-Y) are hydroxylated in some or all of the chains.

Its subcellular location is the secreted. It is found in the extracellular space. It localises to the extracellular matrix. In terms of biological role, collagen type III occurs in most soft connective tissues along with type I collagen. Involved in regulation of cortical development. Is the major ligand of ADGRG1 in the developing brain and binding to ADGRG1 inhibits neuronal migration and activates the RhoA pathway by coupling ADGRG1 to GNA13 and possibly GNA12. The polypeptide is Collagen alpha-1(III) chain (Col3a1) (Rattus norvegicus (Rat)).